A 315-amino-acid polypeptide reads, in one-letter code: Replication factor C small subunit (315 aa).

An ATP-binding site is contributed by 43 to 50 (GSPGVGKT).

This sequence belongs to the activator 1 small subunits family. RfcS subfamily. In terms of assembly, heteromultimer composed of small subunits (RfcS) and large subunits (RfcL).

Part of the RFC clamp loader complex which loads the PCNA sliding clamp onto DNA. The polypeptide is Replication factor C small subunit (Methanococcus maripaludis (strain DSM 14266 / JCM 13030 / NBRC 101832 / S2 / LL)).